We begin with the raw amino-acid sequence, 155 residues long: uncharacterized protein (155 aa).

Residues 4–65 (IDEIDEIIVR…VVDTSFFGEF (62 aa)) form the HTH asnC-type domain. The segment at residues 23–42 (LTELGKKVGLTASAVKNRIE) is a DNA-binding region (H-T-H motif).

This is an uncharacterized protein from Pyrococcus abyssi (strain GE5 / Orsay).